Here is a 35-residue protein sequence, read N- to C-terminus: Photosystem II reaction center protein T (35 aa).

A helical transmembrane segment spans residues 3-23 (ALVYTFLLVSTLGILFFAIFF).

Belongs to the PsbT family. As to quaternary structure, PSII is composed of 1 copy each of membrane proteins PsbA, PsbB, PsbC, PsbD, PsbE, PsbF, PsbH, PsbI, PsbJ, PsbK, PsbL, PsbM, PsbT, PsbY, PsbZ, Psb30/Ycf12, at least 3 peripheral proteins of the oxygen-evolving complex and a large number of cofactors. It forms dimeric complexes.

Its subcellular location is the plastid. The protein resides in the chloroplast thylakoid membrane. Functionally, found at the monomer-monomer interface of the photosystem II (PS II) dimer, plays a role in assembly and dimerization of PSII. PSII is a light-driven water plastoquinone oxidoreductase, using light energy to abstract electrons from H(2)O, generating a proton gradient subsequently used for ATP formation. The sequence is that of Photosystem II reaction center protein T from Gnetum gnemon (Spanish joint-fir).